The following is a 130-amino-acid chain: RutC family protein slr0709 (130 aa).

The protein belongs to the RutC family.

The chain is RutC family protein slr0709 from Synechocystis sp. (strain ATCC 27184 / PCC 6803 / Kazusa).